The chain runs to 370 residues: Aminomethyltransferase (370 aa).

This sequence belongs to the GcvT family. As to quaternary structure, the glycine cleavage system is composed of four proteins: P, T, L and H.

The enzyme catalyses N(6)-[(R)-S(8)-aminomethyldihydrolipoyl]-L-lysyl-[protein] + (6S)-5,6,7,8-tetrahydrofolate = N(6)-[(R)-dihydrolipoyl]-L-lysyl-[protein] + (6R)-5,10-methylene-5,6,7,8-tetrahydrofolate + NH4(+). Functionally, the glycine cleavage system catalyzes the degradation of glycine. The sequence is that of Aminomethyltransferase from Prochlorococcus marinus (strain AS9601).